Here is a 250-residue protein sequence, read N- to C-terminus: MSDDSSDVKPGPKGPEQPAVEQSPENVPAPTGEVHQVGARHGMFGVRGTGDTSGYGGLNQAIVLPGDAQRPYGGWFDEVADGLAAATREAGLEIAAPRVVIHRGEITFHLRREDLLPVAQVLRDDERLRFEFCAGVSGVHYPDETGRELHAVYHLLSMTHNRRIRLEVAVPDADPHIPSIVPVYPTNDWHERETYDMFGIIFDGHPALTRILMPDDWPGHPQRKDYPLGGVPVEYKGGTVPPPDQRRSYN.

Disordered regions lie at residues 1-33 and 228-250; these read MSDD…PTGE and LGGV…RSYN.

It belongs to the complex I 30 kDa subunit family. NDH-1 is composed of 14 different subunits. Subunits NuoB, C, D, E, F, and G constitute the peripheral sector of the complex.

Its subcellular location is the cell membrane. The enzyme catalyses a quinone + NADH + 5 H(+)(in) = a quinol + NAD(+) + 4 H(+)(out). NDH-1 shuttles electrons from NADH, via FMN and iron-sulfur (Fe-S) centers, to quinones in the respiratory chain. The immediate electron acceptor for the enzyme in this species is believed to be a menaquinone. Couples the redox reaction to proton translocation (for every two electrons transferred, four hydrogen ions are translocated across the cytoplasmic membrane), and thus conserves the redox energy in a proton gradient. In Nocardioides sp. (strain ATCC BAA-499 / JS614), this protein is NADH-quinone oxidoreductase subunit C.